The sequence spans 191 residues: Adenylate kinase (191 aa).

12-17 (GSGKTT) provides a ligand contact to ATP. The NMP stretch occupies residues 34–63 (STGDLLRAESAKKTERGLLIEKFTSQGELV). Residues T35, R40, 61–63 (ELV), 88–91 (GYPR), and Q95 contribute to the AMP site. The segment at 130 to 136 (GRSRGAD) is LID. R131 lines the ATP pocket. Positions 133 and 145 each coordinate AMP. R173 lines the ATP pocket.

Belongs to the adenylate kinase family. Monomer.

The protein localises to the cytoplasm. The enzyme catalyses AMP + ATP = 2 ADP. The protein operates within purine metabolism; AMP biosynthesis via salvage pathway; AMP from ADP: step 1/1. Functionally, catalyzes the reversible transfer of the terminal phosphate group between ATP and AMP. Plays an important role in cellular energy homeostasis and in adenine nucleotide metabolism. In Helicobacter pylori (strain HPAG1), this protein is Adenylate kinase.